Here is a 479-residue protein sequence, read N- to C-terminus: Muscarinic acetylcholine receptor M4 (479 aa).

Residues 1–31 (MANFTPVNGSSGNQSVRLVTSSSHNRYETVE) lie on the Extracellular side of the membrane. N-linked (GlcNAc...) asparagine glycosylation is found at N8 and N13. A helical transmembrane segment spans residues 32–54 (MVFIATVTGSLSLVTVVGNILVM). The Cytoplasmic portion of the chain corresponds to 55-68 (LSIKVNRQLQTVNN). The chain crosses the membrane as a helical span at residues 69-89 (YFLFSLACADLIIGAFSMNLY). The Extracellular portion of the chain corresponds to 90-106 (TVYIIKGYWPLGAVVCD). Cysteines 105 and 185 form a disulfide. The chain crosses the membrane as a helical span at residues 107-128 (LWLALDYVVSNASVMNLLIISF). The Cytoplasmic segment spans residues 129–148 (DRYFCVTKPLTYPARRTTKM). The chain crosses the membrane as a helical span at residues 149-171 (AGLMIAAAWVLSFVLWAPAILFW). The Extracellular segment spans residues 172–193 (QFVVGKRTVPDNQCFIQFLSNP). Residues 194-216 (AVTFGTAIAAFYLPVVIMTVLYI) form a helical membrane-spanning segment. At 217–401 (HISLASRSRV…AARERKVTRT (185 aa)) the chain is on the cytoplasmic side. The disordered stretch occupies residues 271-333 (KLEEAPPPAL…PAPPLQPRAL (63 aa)). The span at 275 to 286 (APPPALPPPPRP) shows a compositional bias: pro residues. Residues 294–304 (NESSSGSATQN) show a composition bias toward polar residues. The helical transmembrane segment at 402–422 (IFAILLAFILTWTPYNVMVLV) threads the bilayer. Residues 423-436 (NTFCQSCIPDTVWS) lie on the Extracellular side of the membrane. Residues 437–456 (IGYWLCYVNSTINPACYALC) form a helical membrane-spanning segment. The Cytoplasmic segment spans residues 457–479 (NATFKKTFRHLLLCQYRNIGTAR). 3 positions are modified to phosphothreonine: T459, T463, and T477.

This sequence belongs to the G-protein coupled receptor 1 family. Muscarinic acetylcholine receptor subfamily. CHRM4 sub-subfamily.

It localises to the cell membrane. Its subcellular location is the postsynaptic cell membrane. Its function is as follows. The muscarinic acetylcholine receptor mediates various cellular responses, including inhibition of adenylate cyclase, breakdown of phosphoinositides and modulation of potassium channels through the action of G proteins. Primary transducing effect is inhibition of adenylate cyclase. The protein is Muscarinic acetylcholine receptor M4 (CHRM4) of Homo sapiens (Human).